Consider the following 689-residue polypeptide: Glycine--tRNA ligase beta subunit (689 aa).

Belongs to the class-II aminoacyl-tRNA synthetase family. As to quaternary structure, tetramer of two alpha and two beta subunits.

The protein resides in the cytoplasm. The catalysed reaction is tRNA(Gly) + glycine + ATP = glycyl-tRNA(Gly) + AMP + diphosphate. The chain is Glycine--tRNA ligase beta subunit from Erwinia tasmaniensis (strain DSM 17950 / CFBP 7177 / CIP 109463 / NCPPB 4357 / Et1/99).